A 231-amino-acid chain; its full sequence is Large ribosomal subunit protein uL1 (231 aa).

The protein belongs to the universal ribosomal protein uL1 family. Part of the 50S ribosomal subunit.

Binds directly to 23S rRNA. The L1 stalk is quite mobile in the ribosome, and is involved in E site tRNA release. Its function is as follows. Protein L1 is also a translational repressor protein, it controls the translation of the L11 operon by binding to its mRNA. In Azotobacter vinelandii (strain DJ / ATCC BAA-1303), this protein is Large ribosomal subunit protein uL1.